The chain runs to 112 residues: DNA-binding protein Mboo_1886 (112 aa).

Belongs to the PDCD5 family.

This Methanoregula boonei (strain DSM 21154 / JCM 14090 / 6A8) protein is DNA-binding protein Mboo_1886.